The primary structure comprises 344 residues: Dihydroorotase (344 aa).

2 residues coordinate Zn(2+): histidine 13 and histidine 15. Substrate is bound by residues 15 to 17 and asparagine 41; that span reads HFR. 3 residues coordinate Zn(2+): lysine 98, histidine 135, and histidine 173. Lysine 98 is subject to N6-carboxylysine. Histidine 135 contributes to the substrate binding site. Leucine 218 is a binding site for substrate. Aspartate 246 serves as a coordination point for Zn(2+). Aspartate 246 is a catalytic residue. 2 residues coordinate substrate: histidine 250 and alanine 262.

Belongs to the metallo-dependent hydrolases superfamily. DHOase family. Class II DHOase subfamily. Homodimer. The cofactor is Zn(2+).

It carries out the reaction (S)-dihydroorotate + H2O = N-carbamoyl-L-aspartate + H(+). It participates in pyrimidine metabolism; UMP biosynthesis via de novo pathway; (S)-dihydroorotate from bicarbonate: step 3/3. Functionally, catalyzes the reversible cyclization of carbamoyl aspartate to dihydroorotate. This Pseudoalteromonas atlantica (strain T6c / ATCC BAA-1087) protein is Dihydroorotase.